Consider the following 211-residue polypeptide: 3-demethoxyubiquinol 3-hydroxylase (211 aa).

Positions 60, 90, 93, 142, 174, and 177 each coordinate Fe cation.

Belongs to the COQ7 family. It depends on Fe cation as a cofactor.

It is found in the cell membrane. It catalyses the reaction a 5-methoxy-2-methyl-3-(all-trans-polyprenyl)benzene-1,4-diol + AH2 + O2 = a 3-demethylubiquinol + A + H2O. It functions in the pathway cofactor biosynthesis; ubiquinone biosynthesis. Functionally, catalyzes the hydroxylation of 2-nonaprenyl-3-methyl-6-methoxy-1,4-benzoquinol during ubiquinone biosynthesis. This chain is 3-demethoxyubiquinol 3-hydroxylase, found in Acinetobacter baylyi (strain ATCC 33305 / BD413 / ADP1).